The sequence spans 63 residues: ATPase inhibitor, mitochondrial (63 aa).

The disordered stretch occupies residues 1–23 (TAGATGATRQDGSTDAFEKREKA). Residues 18-62 (EKREKAQEDLYIRQHEKEQLEALKESLKKQKKSLDDLEBKIDDLT) are a coiled coil.

This sequence belongs to the ATPase inhibitor family.

It is found in the mitochondrion. Its function is as follows. This protein forms a one-to-one complex with ATPase to inhibit the enzyme activity completely. In Cyberlindnera jadinii (Torula yeast), this protein is ATPase inhibitor, mitochondrial.